The following is a 2839-amino-acid chain: Bifunctional DNA-directed RNA polymerase subunit beta-beta' (2839 aa).

The segment at 1 to 1433 is DNA-directed RNA polymerase subunit beta; it reads MVDSSYMCAS…CLNVALKQNN (1433 aa). Residues 1436-2839 are DNA-directed RNA polymerase subunit beta'; sequence IEDISHTNIA…KESVAESRYN (1404 aa). Cys1501, Cys1503, Cys1516, and Cys1519 together coordinate Zn(2+). Mg(2+)-binding residues include Asp1893, Asp1895, and Asp1897. 4 residues coordinate Zn(2+): Cys2238, Cys2312, Cys2319, and Cys2322.

This sequence in the N-terminal section; belongs to the RNA polymerase beta chain family. It in the C-terminal section; belongs to the RNA polymerase beta' chain family. As to quaternary structure, the RNAP catalytic core consists of 2 alpha, 1 beta/beta' and 1 omega subunit. When a sigma factor is associated with the core the holoenzyme is formed, which can initiate transcription. The cofactor is Mg(2+). Requires Zn(2+) as cofactor.

It catalyses the reaction RNA(n) + a ribonucleoside 5'-triphosphate = RNA(n+1) + diphosphate. DNA-dependent RNA polymerase catalyzes the transcription of DNA into RNA using the four ribonucleoside triphosphates as substrates. In Wolbachia sp. subsp. Brugia malayi (strain TRS), this protein is Bifunctional DNA-directed RNA polymerase subunit beta-beta' (rpoBC).